The sequence spans 636 residues: Threonine--tRNA ligase (636 aa).

The TGS domain occupies 1 to 59 (MPIITLPDGTKKIFEQVVSVEQVAKSMGLVKAALAGEVDGELVSTSFLIKTDANLTIIT). The tract at residues 240–531 (DHRKIGKTQD…LIEHYEGAYP (292 aa)) is catalytic. Zn(2+)-binding residues include Cys331, His382, and His508.

The protein belongs to the class-II aminoacyl-tRNA synthetase family. In terms of assembly, homodimer. Zn(2+) is required as a cofactor.

Its subcellular location is the cytoplasm. The enzyme catalyses tRNA(Thr) + L-threonine + ATP = L-threonyl-tRNA(Thr) + AMP + diphosphate + H(+). In terms of biological role, catalyzes the attachment of threonine to tRNA(Thr) in a two-step reaction: L-threonine is first activated by ATP to form Thr-AMP and then transferred to the acceptor end of tRNA(Thr). Also edits incorrectly charged L-seryl-tRNA(Thr). The chain is Threonine--tRNA ligase from Vesicomyosocius okutanii subsp. Calyptogena okutanii (strain HA).